We begin with the raw amino-acid sequence, 164 residues long: ATP synthase subunit b (164 aa).

Residues 6–26 (GELVGNFILVTGSVIVLLLLI) form a helical membrane-spanning segment.

This sequence belongs to the ATPase B chain family. In terms of assembly, F-type ATPases have 2 components, F(1) - the catalytic core - and F(0) - the membrane proton channel. F(1) has five subunits: alpha(3), beta(3), gamma(1), delta(1), epsilon(1). F(0) has three main subunits: a(1), b(2) and c(10-14). The alpha and beta chains form an alternating ring which encloses part of the gamma chain. F(1) is attached to F(0) by a central stalk formed by the gamma and epsilon chains, while a peripheral stalk is formed by the delta and b chains.

The protein resides in the cell membrane. Functionally, f(1)F(0) ATP synthase produces ATP from ADP in the presence of a proton or sodium gradient. F-type ATPases consist of two structural domains, F(1) containing the extramembraneous catalytic core and F(0) containing the membrane proton channel, linked together by a central stalk and a peripheral stalk. During catalysis, ATP synthesis in the catalytic domain of F(1) is coupled via a rotary mechanism of the central stalk subunits to proton translocation. In terms of biological role, component of the F(0) channel, it forms part of the peripheral stalk, linking F(1) to F(0). In Streptococcus pyogenes serotype M3 (strain ATCC BAA-595 / MGAS315), this protein is ATP synthase subunit b.